A 1104-amino-acid chain; its full sequence is Protein KIBRA (1104 aa).

WW domains are found at residues 6–39 (LPLP…DPRD) and 53–86 (DELP…DPRV). Positions 107–193 (LSAQKEIYQV…ELQFKERGFQ (87 aa)) form a coiled coil. Serine 141 bears the Phosphoserine mark. 2 disordered regions span residues 429–449 (SMQS…RGSL) and 509–547 (TQKA…SPPC). Residues 527–542 (TPRSMTSLSPRSSLSS) are compositionally biased toward low complexity. Residue serine 535 is modified to Phosphoserine. Residue serine 542 is modified to Phosphoserine; by CDK1. In terms of domain architecture, C2 spans 659–782 (GATRVQIALK…RSGERSTRWY (124 aa)). The disordered stretch occupies residues 822–949 (LEKRQEGRSS…DSSTLSKKPP (128 aa)). Residues 836-1104 (EGSWTYEEEA…NIPALSADDV (269 aa)) form an interaction with histone H3 region. Positions 841 to 862 (YEEEASENEAVAEEEEEGEEDV) are enriched in acidic residues. A phosphoserine mark is found at serine 887, serine 891, and serine 919. Positions 916-930 (IIRSKTFSPGPQSQY) are enriched in polar residues. Phosphothreonine is present on threonine 921. Serine 923 is modified (phosphoserine; by CDK1). Serine 939 is modified (phosphoserine). Interaction with PRKCZ regions lie at residues 945–988 (SKKP…LDLQ) and 948–967 (PPFV…RPSS). Phosphoserine; by PKC/PRKCZ is present on residues serine 967 and serine 970. Positions 994–1024 (HSQLTQEISVLKELKEHLEQAKNHGEKELPQ) form a coiled coil. The short motif at 1102–1104 (DDV) is the ADDV motif element.

This sequence belongs to the WWC family. KIBRA subfamily. As to quaternary structure, homodimer. Forms heterodimers with WWC2 and WWC3. Interacts with DDN. Interacts with DYNLL1 and histone H3. The interaction with DYNLL1 is mandatory for the recruitment and transactivation functions of ESR1 or DYNLL1 to the target chromatin and the interaction with histone H3 ensures proper regulatory interaction of WWC1-DYNLL1-ESR1 complexes with target chromatin. Interacts (via WW domains) with DDR1 (via PPxY motif) in a collagen-regulated manner. Interacts with PRKCZ (via the protein kinase domain). Forms a tripartite complex with DDR1 and PRKCZ, but predominantly in the absence of collagen. Interacts (via the ADDV motif) with PATJ (via PDZ domain 8). Interacts (via WW domains) with SYNPO (via PPxY motifs). Interacts with NF2 and SNX4. Interacts with CCDC141; retains AMPAR in the cytosol after internalization. Interacts with DLC1 and PRKCZ. Interacts (via WW domains) with LATS1 and LATS2. Post-translationally, phosphorylation at Ser-542 and Ser-923 by CDK1 in response to spindle damage stress regulates mitotic exit, these two sites are dephosphorylated by CDC14B. Mammary epithelium.

The protein localises to the cytoplasm. It is found in the perinuclear region. It localises to the nucleus. The protein resides in the cell projection. Its subcellular location is the ruffle membrane. The protein localises to the cytosol. Functionally, regulator of the Hippo signaling pathway, also known as the Salvador-Warts-Hippo (SWH) pathway. Enhances phosphorylation of LATS1 and YAP1 and negatively regulates cell proliferation and organ growth due to a suppression of the transcriptional activity of YAP1, the major effector of the Hippo pathway. Along with NF2 can synergistically induce the phosphorylation of LATS1 and LATS2 and function in the regulation of Hippo signaling pathway. Acts as a transcriptional coactivator of ESR1 which plays an essential role in DYNLL1-mediated ESR1 transactivation. Modulates directional migration of podocytes. May be associated with memory performance. Regulates collagen-stimulated activation of the ERK/MAPK cascade. Plays an important role in regulating AMPA-selective glutamate receptors (AMPARs) trafficking. The polypeptide is Protein KIBRA (Wwc1) (Mus musculus (Mouse)).